The following is a 353-amino-acid chain: Holliday junction branch migration complex subunit RuvB (353 aa).

Residues 4 to 186 (ADRLIAATHS…FGIVQRLEFY (183 aa)) are large ATPase domain (RuvB-L). ATP is bound by residues I25, R26, G67, K70, T71, T72, 133-135 (EDF), R176, Y186, and R223. Residue T71 participates in Mg(2+) binding. A small ATPAse domain (RuvB-S) region spans residues 187 to 257 (STADLATIVS…VADLALNLLD (71 aa)). Residues 260 to 353 (EHGFDHQDRR…VDEFLDAVDD (94 aa)) form a head domain (RuvB-H) region. DNA-binding residues include R296, R315, and R320.

This sequence belongs to the RuvB family. As to quaternary structure, homohexamer. Forms an RuvA(8)-RuvB(12)-Holliday junction (HJ) complex. HJ DNA is sandwiched between 2 RuvA tetramers; dsDNA enters through RuvA and exits via RuvB. An RuvB hexamer assembles on each DNA strand where it exits the tetramer. Each RuvB hexamer is contacted by two RuvA subunits (via domain III) on 2 adjacent RuvB subunits; this complex drives branch migration. In the full resolvosome a probable DNA-RuvA(4)-RuvB(12)-RuvC(2) complex forms which resolves the HJ.

The protein localises to the cytoplasm. The catalysed reaction is ATP + H2O = ADP + phosphate + H(+). The RuvA-RuvB-RuvC complex processes Holliday junction (HJ) DNA during genetic recombination and DNA repair, while the RuvA-RuvB complex plays an important role in the rescue of blocked DNA replication forks via replication fork reversal (RFR). RuvA specifically binds to HJ cruciform DNA, conferring on it an open structure. The RuvB hexamer acts as an ATP-dependent pump, pulling dsDNA into and through the RuvAB complex. RuvB forms 2 homohexamers on either side of HJ DNA bound by 1 or 2 RuvA tetramers; 4 subunits per hexamer contact DNA at a time. Coordinated motions by a converter formed by DNA-disengaged RuvB subunits stimulates ATP hydrolysis and nucleotide exchange. Immobilization of the converter enables RuvB to convert the ATP-contained energy into a lever motion, pulling 2 nucleotides of DNA out of the RuvA tetramer per ATP hydrolyzed, thus driving DNA branch migration. The RuvB motors rotate together with the DNA substrate, which together with the progressing nucleotide cycle form the mechanistic basis for DNA recombination by continuous HJ branch migration. Branch migration allows RuvC to scan DNA until it finds its consensus sequence, where it cleaves and resolves cruciform DNA. This chain is Holliday junction branch migration complex subunit RuvB, found in Pseudomonas fluorescens (strain Pf0-1).